The sequence spans 290 residues: HTH-type transcriptional activator RhaR (290 aa).

The HTH araC/xylS-type domain occupies 179–277 (DLIMSALQQS…GMTPRDYRQR (99 aa)). DNA-binding regions (H-T-H motif) lie at residues 196–217 (ANFC…RQQT) and 244–267 (ISDI…TREA).

As to quaternary structure, binds DNA as a dimer.

The protein localises to the cytoplasm. Its function is as follows. Activates expression of the rhaSR operon in response to L-rhamnose. This Yersinia pseudotuberculosis serotype O:3 (strain YPIII) protein is HTH-type transcriptional activator RhaR.